Here is a 116-residue protein sequence, read N- to C-terminus: uncharacterized protein (116 aa).

Transmembrane regions (helical) follow at residues 8-28 (FMIY…VSFA), 39-59 (GLLL…NPPF), and 75-95 (FLLI…YLMV).

The protein to M.jannaschii MJ1580.

The protein localises to the cell membrane. This is an uncharacterized protein from Methanothermobacter thermautotrophicus (strain ATCC 29096 / DSM 1053 / JCM 10044 / NBRC 100330 / Delta H) (Methanobacterium thermoautotrophicum).